Reading from the N-terminus, the 239-residue chain is Uridylate kinase (239 aa).

10 to 13 serves as a coordination point for ATP; it reads KLSG. G53 is a binding site for UMP. Residues G54 and R58 each contribute to the ATP site. Residues D73 and 135–142 each bind UMP; that span reads TGRPYFTT. 3 residues coordinate ATP: N163, Y169, and D172.

It belongs to the UMP kinase family. Homohexamer.

The protein resides in the cytoplasm. The enzyme catalyses UMP + ATP = UDP + ADP. It functions in the pathway pyrimidine metabolism; CTP biosynthesis via de novo pathway; UDP from UMP (UMPK route): step 1/1. Inhibited by UTP. Catalyzes the reversible phosphorylation of UMP to UDP. The polypeptide is Uridylate kinase (Mycoplasmopsis synoviae (strain 53) (Mycoplasma synoviae)).